Reading from the N-terminus, the 216-residue chain is Transmembrane emp24 domain-containing protein eca (216 aa).

The N-terminal stretch at 1 to 20 (MRDQFISLALMLCILHSACG) is a signal peptide. The Lumenal portion of the chain corresponds to 21–182 (LYFHISETER…FRHTSESTNS (162 aa)). Residues 30-126 (RKCFIEEVPD…QLRVHLDIQV (97 aa)) enclose the GOLD domain. Positions 134–164 (ANVAQKEKLTELQLRIRQLLDQVEQITKEQN) form a coiled coil. Residues 183 to 203 (RVLWWSLAQTVVLVCMGFWQM) traverse the membrane as a helical segment. The Cytoplasmic segment spans residues 204–216 (RHLKSFFEAKKLV). A Prevents secretion from ER motif is present at residues 213 to 216 (KKLV).

This sequence belongs to the EMP24/GP25L family.

It localises to the endoplasmic reticulum membrane. Eca and bai are essential, though not redundant, for dorsoventral patterning of the embryo. Specifically required during early embryogenesis for the activity of maternal tkv, while the zygotic tkv is not affected. Involved in Golgi organization. The polypeptide is Transmembrane emp24 domain-containing protein eca (Drosophila erecta (Fruit fly)).